Here is a 134-residue protein sequence, read N- to C-terminus: MAARVCCQLDPARDVLCLRPVGAESRGRPVSGPFGPLPSPSSSAVPADHGAHLSLRGLPVCAFSSAEPCALRLTSARRMETTVNAHQVLPKVLHKRTLGLSAMSTTDLEAYFKDCLFKDWEELGEEIRLKVWRL.

The segment at 25–48 (SRGRPVSGPFGPLPSPSSSAVPAD) is disordered. The segment covering 29–47 (PVSGPFGPLPSPSSSAVPA) has biased composition (low complexity). A mitochondrial targeting sequence region spans residues 68–117 (PCALRLTSARRMETTVNAHQVLPKVLHKRTLGLSAMSTTDLEAYFKDCLF).

It belongs to the orthohepadnavirus protein X family. In terms of assembly, may form homodimer. May interact with host CEBPA, CFLAR, CREB1, DDB1, E4F1, HBXIP, HSPD1/HSP60, NFKBIA, POLR2E and SMAD4. Interacts with host SMC5-SMC6 complex and induces its degradation. Interacts with host TRPC4AP; leading to prevent ubiquitination of TRPC4AP. Interacts with host PLSCR1; this interaction promotes ubiquitination and degradation of HBx and impairs HBx-mediated cell proliferation. Post-translationally, a fraction may be phosphorylated in insect cells and HepG2 cells, a human hepatoblastoma cell line. Phosphorylated in vitro by host protein kinase C or mitogen-activated protein kinase. N-acetylated in insect cells.

It is found in the host cytoplasm. Its subcellular location is the host nucleus. The protein localises to the host mitochondrion. Multifunctional protein that plays a role in silencing host antiviral defenses and promoting viral transcription. Does not seem to be essential for HBV infection. May be directly involved in development of cirrhosis and liver cancer (hepatocellular carcinoma). Most of cytosolic activities involve modulation of cytosolic calcium. The effect on apoptosis is controversial depending on the cell types in which the studies have been conducted. May induce apoptosis by localizing in mitochondria and causing loss of mitochondrial membrane potential. May also modulate apoptosis by binding host CFLAR, a key regulator of the death-inducing signaling complex (DISC). Promotes viral transcription by using the host E3 ubiquitin ligase DDB1 to target the SMC5-SMC6 complex to proteasomal degradation. This host complex would otherwise bind to viral episomal DNA, and prevents its transcription. Moderately stimulates transcription of many different viral and cellular transcription elements. Promoters and enhancers stimulated by HBx contain DNA binding sites for NF-kappa-B, AP-1, AP-2, c-EBP, ATF/CREB, or the calcium-activated factor NF-AT. This chain is Protein X, found in Homo sapiens (Human).